The chain runs to 543 residues: Glucose-6-phosphate isomerase (543 aa).

E353 functions as the Proton donor in the catalytic mechanism. Active-site residues include H384 and K504.

This sequence belongs to the GPI family.

Its subcellular location is the cytoplasm. It catalyses the reaction alpha-D-glucose 6-phosphate = beta-D-fructose 6-phosphate. It functions in the pathway carbohydrate biosynthesis; gluconeogenesis. Its pathway is carbohydrate degradation; glycolysis; D-glyceraldehyde 3-phosphate and glycerone phosphate from D-glucose: step 2/4. Catalyzes the reversible isomerization of glucose-6-phosphate to fructose-6-phosphate. The chain is Glucose-6-phosphate isomerase from Roseiflexus castenholzii (strain DSM 13941 / HLO8).